The chain runs to 356 residues: Protein-glutamate methylesterase/protein-glutamine glutaminase 4 (356 aa).

The region spanning 15–132 (RVLVVDDSAV…SVGEMTADLV (118 aa)) is the Response regulatory domain. D66 is subject to 4-aspartylphosphate. In terms of domain architecture, CheB-type methylesterase spans 162–348 (ARTTLQVVAI…PLDRIAPEIL (187 aa)). Active-site residues include S174, H200, and D296.

This sequence belongs to the CheB family. Post-translationally, phosphorylated by CheA. Phosphorylation of the N-terminal regulatory domain activates the methylesterase activity.

The protein resides in the cytoplasm. It carries out the reaction [protein]-L-glutamate 5-O-methyl ester + H2O = L-glutamyl-[protein] + methanol + H(+). The catalysed reaction is L-glutaminyl-[protein] + H2O = L-glutamyl-[protein] + NH4(+). In terms of biological role, involved in chemotaxis. Part of a chemotaxis signal transduction system that modulates chemotaxis in response to various stimuli. Catalyzes the demethylation of specific methylglutamate residues introduced into the chemoreceptors (methyl-accepting chemotaxis proteins or MCP) by CheR. Also mediates the irreversible deamidation of specific glutamine residues to glutamic acid. In Anaeromyxobacter dehalogenans (strain 2CP-C), this protein is Protein-glutamate methylesterase/protein-glutamine glutaminase 4.